Consider the following 223-residue polypeptide: ATP synthase subunit a 2 (223 aa).

5 helical membrane passes run 17–37, 77–97, 106–126, 173–193, and 195–215; these read VAIT…ALVC, FLPL…SGVL, KIET…YFGV, FIIG…LMAL, and ILVG…FIGA.

It belongs to the ATPase A chain family. F-type ATPases have 2 components, CF(1) - the catalytic core - and CF(0) - the membrane proton channel. CF(1) has five subunits: alpha(3), beta(3), gamma(1), delta(1), epsilon(1). CF(0) has four main subunits: a, b, b' and c.

It is found in the cell inner membrane. In terms of biological role, key component of the proton channel; it plays a direct role in the translocation of protons across the membrane. The protein is ATP synthase subunit a 2 of Bradyrhizobium sp. (strain BTAi1 / ATCC BAA-1182).